The sequence spans 616 residues: Elongation factor 4 (616 aa).

Residues Ser-14–Val-195 form the tr-type G domain. GTP-binding positions include Asp-26–Thr-31 and Asn-142–Asp-145.

It belongs to the TRAFAC class translation factor GTPase superfamily. Classic translation factor GTPase family. LepA subfamily.

It localises to the cell membrane. It carries out the reaction GTP + H2O = GDP + phosphate + H(+). Its function is as follows. Required for accurate and efficient protein synthesis under certain stress conditions. May act as a fidelity factor of the translation reaction, by catalyzing a one-codon backward translocation of tRNAs on improperly translocated ribosomes. Back-translocation proceeds from a post-translocation (POST) complex to a pre-translocation (PRE) complex, thus giving elongation factor G a second chance to translocate the tRNAs correctly. Binds to ribosomes in a GTP-dependent manner. This is Elongation factor 4 from Nocardia farcinica (strain IFM 10152).